A 304-amino-acid polypeptide reads, in one-letter code: Dihydroorotate dehydrogenase B (NAD(+)), catalytic subunit (304 aa).

Residues Ser-21 and 45–46 (KA) contribute to the FMN site. Substrate-binding positions include Lys-45 and 69–73 (NAIGL). Positions 99 and 127 each coordinate FMN. Substrate is bound at residue Asn-127. Cys-130 acts as the Nucleophile in catalysis. 2 residues coordinate FMN: Lys-165 and Ile-191. A substrate-binding site is contributed by 192-193 (NT). Residues Gly-217, 243 to 244 (GG), and 265 to 266 (GT) contribute to the FMN site.

The protein belongs to the dihydroorotate dehydrogenase family. Type 1 subfamily. Heterotetramer of 2 PyrK and 2 PyrD type B subunits. FMN is required as a cofactor.

The protein resides in the cytoplasm. The catalysed reaction is (S)-dihydroorotate + NAD(+) = orotate + NADH + H(+). The protein operates within pyrimidine metabolism; UMP biosynthesis via de novo pathway; orotate from (S)-dihydroorotate (NAD(+) route): step 1/1. Functionally, catalyzes the conversion of dihydroorotate to orotate with NAD(+) as electron acceptor. The polypeptide is Dihydroorotate dehydrogenase B (NAD(+)), catalytic subunit (pyrD) (Listeria monocytogenes serotype 4a (strain HCC23)).